The sequence spans 371 residues: DNA replication and repair protein RecF (371 aa).

Residue 30–37 (GQNGSGKT) participates in ATP binding.

The protein belongs to the RecF family.

Its subcellular location is the cytoplasm. Functionally, the RecF protein is involved in DNA metabolism; it is required for DNA replication and normal SOS inducibility. RecF binds preferentially to single-stranded, linear DNA. It also seems to bind ATP. This chain is DNA replication and repair protein RecF, found in Chlorobium phaeovibrioides (strain DSM 265 / 1930) (Prosthecochloris vibrioformis (strain DSM 265)).